The primary structure comprises 370 residues: ECF RNA polymerase sigma factor SigG (370 aa).

The interval 63–129 is sigma-70 factor domain-2; sequence EPYRRELLAH…LTALEGRRRR (67 aa). The Polymerase core binding signature appears at 85 to 88; sequence DLVQ. Positions 180 to 232 are sigma-70 factor domain-4; that stretch reads LAFVAALQHLSPRQRAVLLLRDVLQWKSAEVADAIGTSTVAVNSLLQRARSQL. The segment at residues 207-226 is a DNA-binding region (H-T-H motif); the sequence is SAEVADAIGTSTVAVNSLLQ.

The protein belongs to the sigma-70 factor family. ECF subfamily. In terms of assembly, interacts transiently with the RNA polymerase catalytic core formed by RpoA, RpoB, RpoC and RpoZ (2 alpha, 1 beta, 1 beta' and 1 omega subunit) to form the RNA polymerase holoenzyme that can initiate transcription.

Sigma factors are initiation factors that promote the attachment of RNA polymerase to specific initiation sites and are then released. Extracytoplasmic function (ECF) sigma factors are held in an inactive form by a cognate anti-sigma factor until released, although no anti-sigma factor is known for this protein. May be involved in host intracellular survival after infection (strains H37Rv and CDC 1551). A role in the SOS response is controversial; it has been seen in strain CDC 1551 but not in H37Rv. This is ECF RNA polymerase sigma factor SigG (sigG) from Mycobacterium tuberculosis (strain CDC 1551 / Oshkosh).